The following is a 257-amino-acid chain: Triosephosphate isomerase (257 aa).

Residue 9 to 11 (NWK) participates in substrate binding. His95 acts as the Electrophile in catalysis. The active-site Proton acceptor is Glu168. Substrate is bound by residues Gly174, Ser213, and 234 to 235 (GG).

Belongs to the triosephosphate isomerase family. Homodimer.

It localises to the cytoplasm. It carries out the reaction D-glyceraldehyde 3-phosphate = dihydroxyacetone phosphate. Its pathway is carbohydrate biosynthesis; gluconeogenesis. It functions in the pathway carbohydrate degradation; glycolysis; D-glyceraldehyde 3-phosphate from glycerone phosphate: step 1/1. In terms of biological role, involved in the gluconeogenesis. Catalyzes stereospecifically the conversion of dihydroxyacetone phosphate (DHAP) to D-glyceraldehyde-3-phosphate (G3P). This chain is Triosephosphate isomerase, found in Acidithiobacillus ferrooxidans (strain ATCC 23270 / DSM 14882 / CIP 104768 / NCIMB 8455) (Ferrobacillus ferrooxidans (strain ATCC 23270)).